Consider the following 471-residue polypeptide: UDP-N-acetylmuramate--L-alanine ligase (471 aa).

114–120 (GTHGKTT) is an ATP binding site.

This sequence belongs to the MurCDEF family.

The protein localises to the cytoplasm. The catalysed reaction is UDP-N-acetyl-alpha-D-muramate + L-alanine + ATP = UDP-N-acetyl-alpha-D-muramoyl-L-alanine + ADP + phosphate + H(+). The protein operates within cell wall biogenesis; peptidoglycan biosynthesis. In terms of biological role, cell wall formation. The chain is UDP-N-acetylmuramate--L-alanine ligase from Brucella abortus (strain S19).